A 283-amino-acid polypeptide reads, in one-letter code: Pantothenate synthetase (283 aa).

30-37 (MGNLHDGH) serves as a coordination point for ATP. Histidine 37 serves as the catalytic Proton donor. Glutamine 61 contributes to the (R)-pantoate binding site. Glutamine 61 is a beta-alanine binding site. Residue 149–152 (GEKD) participates in ATP binding. Position 155 (glutamine 155) interacts with (R)-pantoate. ATP is bound at residue 186-189 (LSSR).

The protein belongs to the pantothenate synthetase family. As to quaternary structure, homodimer.

It localises to the cytoplasm. It carries out the reaction (R)-pantoate + beta-alanine + ATP = (R)-pantothenate + AMP + diphosphate + H(+). Its pathway is cofactor biosynthesis; (R)-pantothenate biosynthesis; (R)-pantothenate from (R)-pantoate and beta-alanine: step 1/1. In terms of biological role, catalyzes the condensation of pantoate with beta-alanine in an ATP-dependent reaction via a pantoyl-adenylate intermediate. The protein is Pantothenate synthetase of Escherichia coli O127:H6 (strain E2348/69 / EPEC).